Here is a 542-residue protein sequence, read N- to C-terminus: Putative selenium-binding protein (542 aa).

Belongs to the selenium-binding protein family.

The sequence is that of Putative selenium-binding protein from Caenorhabditis elegans.